The following is a 387-amino-acid chain: Methyltransferase phomM (387 aa).

Residues 98–223 are methyltransferase domain; sequence PHRPKDLHIL…QSVADLFTTL (126 aa).

The protein belongs to the class I-like SAM-binding methyltransferase superfamily. Erg6/SMT family.

It participates in mycotoxin biosynthesis. Functionally, methyltransferase; part of the gene cluster that mediates the biosynthesis of the phomopsins, a group of hexapeptide mycotoxins which infects lupins and causes lupinosis disease in livestock. Within the pathway, phomM acts as an S-adenosylmethionine-dependent alpha-N-methyltransferase that catalyzes two successive N-methylation reactions, converting N-desmethyl-phomopsin A to phomopsin A and phomopsin A further to an N,N-dimethylated congener called phomopsin E. The pathway starts with the processing of the precursor phomA by several endopeptidases including kexin proteases as well as the cluster-specific S41 family peptidase phomP1 and the oligopeptidase phomG to produce 10 identical copies of the hexapeptide Tyr-Val-Ile-Pro-Ile-Asp. After being excised from the precursor peptide, the core peptides are cyclized and modified post-translationally by enzymes encoded within the gene cluster. The timing and order of proteolysis of the phomA precursor and PTMs are still unknown. Two tyrosinase-like enzymes, phomQ1 and phomQ2, catalyze the chlorination and hydroxylation of Tyr, respectively. PhomYb, is proposed to be involved in the construction of the macrocyclic structure. The other 4 ustYa family proteins may be involved in PTMs that generate the unique structure of phomopsin A. PhomYa is required for the hydroxylation of C-beta of Tyr. PhomYc, phomYd, and phomYe are responsible for the biosynthesis of 2,3-dehydroisoleucine (dIle), 2,3-dehydroaspartic acid (dAsp), and 3,4-dehydroproline (dPro), respectively. While dIle formation by phomYc is indispensable for the installation of dAsp by phomYd, the order of the other PTMs have not been elucidated yet. Most of the biosynthetic enzymes likely have broad substrate specificity, and thus, there might be a metabolic grid from a precursor to phomopsin A. The enzyme(s) responsible for the biosynthesis of 3,4-dehydrovaline (dVal) have also not been identified yet. Finally, phomM acts as an S-adenosylmethionine-dependent alpha-N-methyltransferase that catalyzes two successive N-methylation reactions, converting N-desmethyl-phomopsin A to phomopsin A and phomopsin A further to an N,N-dimethylated congener called phomopsin E. The sequence is that of Methyltransferase phomM from Diaporthe leptostromiformis (Lupinosis disease fungus).